The following is a 407-amino-acid chain: Methylthioribose kinase (407 aa).

Residues asparagine 40, lysine 57, and 111–113 (EDL) contribute to the ATP site. Aspartate 229 serves as a coordination point for substrate. 246–248 (DAE) contacts ATP. Arginine 344 contributes to the substrate binding site.

Belongs to the methylthioribose kinase family. In terms of assembly, homodimer.

The enzyme catalyses 5-(methylsulfanyl)-D-ribose + ATP = 5-(methylsulfanyl)-alpha-D-ribose 1-phosphate + ADP + H(+). Its pathway is amino-acid biosynthesis; L-methionine biosynthesis via salvage pathway; S-methyl-5-thio-alpha-D-ribose 1-phosphate from S-methyl-5'-thioadenosine (hydrolase route): step 2/2. In terms of biological role, catalyzes the phosphorylation of methylthioribose into methylthioribose-1-phosphate. This is Methylthioribose kinase from Yersinia pestis bv. Antiqua (strain Angola).